The sequence spans 59 residues: Aedesin (59 aa).

A signal peptide spans 1–23; the sequence is MNFTKLFAIVLLAALVLLGQTEA.

It belongs to the cecropin family. In terms of tissue distribution, salivary gland (at protein level).

Its subcellular location is the secreted. Its function is as follows. Antimicrobial peptide. Exhibits antibacterial activity against Gram-negative bacteria, such as Escherichia coli, Pseudomonas aeruginosa, Acinetobacter baumannii and Klebsiella pneumoniae. Shows no antibacterial effects against Gram-positive bacteria, such as Staphylococcus aureus, Enterococcus faecalis and Enterococcus faecium. Exhibits antiviral activity against all four dengue virus serotypes and chikungunya virus. Exhibits leishmanicidal activity. Partially neutralizes lipopolysaccharides (LPS). Exhibits anti-inflammatory properties: inhibits LPS-induced iNOS/NOS2 transcription, nitric oxide (NO) and pro-inflammatory cytokine production in mouse macrophages and human peripheral blood mononuclear cells (PBMCs); inhibits LPS-induced activation of MAPK and NF-kappa-B signaling pathways in mouse macrophages. The protein is Aedesin of Aedes aegypti (Yellowfever mosquito).